A 538-amino-acid polypeptide reads, in one-letter code: UPF0761 membrane protein PsycPRwf_0630 (538 aa).

6 consecutive transmembrane segments (helical) span residues 43–63 (LLSI…VPAL), 100–120 (LTAI…TTIE), 143–163 (WTII…SSAV), 183–203 (WVQV…YWFI), 215–235 (IAGV…GIIM), and 247–267 (AFAA…LILL). The disordered stretch occupies residues 427 to 538 (SVFSAQDADA…IITEDDNPNK (112 aa)). Positions 482–493 (PPDADIKAAAAK) are enriched in low complexity. Residues 503–514 (KHTETAKQEHKK) are compositionally biased toward basic and acidic residues.

It belongs to the UPF0761 family.

It localises to the cell inner membrane. This is UPF0761 membrane protein PsycPRwf_0630 from Psychrobacter sp. (strain PRwf-1).